Consider the following 60-residue polypeptide: Large ribosomal subunit protein bL32 (60 aa).

Basic residues predominate over residues 1 to 16 (MAVPRRKTSPSRRGMR). Residues 1–60 (MAVPRRKTSPSRRGMRRSADAIKRPTYVEDKDSGELRRPHHLDLKTGMYKGRQVLKKKDS) are disordered. Residues 17 to 44 (RSADAIKRPTYVEDKDSGELRRPHHLDL) show a composition bias toward basic and acidic residues.

The chain is Large ribosomal subunit protein bL32 from Rhodopseudomonas palustris (strain ATCC BAA-98 / CGA009).